A 328-amino-acid chain; its full sequence is Homeobox protein Hox-C13 (328 aa).

Residues 23 to 48 (AAESGSGGGGGGGGAGGAGGGCSGAS) form a disordered region. Gly residues predominate over residues 27 to 45 (GSGGGGGGGGAGGAGGGCS). A DNA-binding region (homeobox) is located at residues 258–317 (GRKKRVPYTKVQLKELEKEYAASKFITKEKRRRISATTNLSERQVTIWFQNRRVKEKKVV).

It belongs to the Abd-B homeobox family. Expressed in differentiating keratinocytes. In the hair follicle lower matrix, expressed in all 3 hair shaft-forming compartments, i.e. cuticle, cortex and medulla. Expression stops sharply at the boundary with the germinal matrix compartment.

It is found in the nucleus. Transcription factor which plays a role in hair follicle differentiation. Regulates FOXQ1 expression and that of other hair-specific genes. This Mus musculus (Mouse) protein is Homeobox protein Hox-C13 (Hoxc13).